A 677-amino-acid chain; its full sequence is Methionine--tRNA ligase (677 aa).

Positions P15–H25 match the 'HIGH' region motif. Residues C146, C149, C159, and C162 each coordinate Zn(2+). The 'KMSKS' region motif lies at K333–S337. Position 336 (K336) interacts with ATP. Positions D575 to K677 constitute a tRNA-binding domain.

Belongs to the class-I aminoacyl-tRNA synthetase family. MetG type 1 subfamily. Homodimer. Requires Zn(2+) as cofactor.

Its subcellular location is the cytoplasm. It catalyses the reaction tRNA(Met) + L-methionine + ATP = L-methionyl-tRNA(Met) + AMP + diphosphate. Is required not only for elongation of protein synthesis but also for the initiation of all mRNA translation through initiator tRNA(fMet) aminoacylation. The polypeptide is Methionine--tRNA ligase (metG) (Escherichia coli (strain K12)).